Consider the following 157-residue polypeptide: Small ribosomal subunit protein uS7 (157 aa).

This sequence belongs to the universal ribosomal protein uS7 family. As to quaternary structure, part of the 30S ribosomal subunit. Contacts proteins S9 and S11.

Its function is as follows. One of the primary rRNA binding proteins, it binds directly to 16S rRNA where it nucleates assembly of the head domain of the 30S subunit. Is located at the subunit interface close to the decoding center, probably blocks exit of the E-site tRNA. The chain is Small ribosomal subunit protein uS7 from Borreliella afzelii (strain PKo) (Borrelia afzelii).